We begin with the raw amino-acid sequence, 171 residues long: S-ribosylhomocysteine lyase (171 aa).

Positions 54, 58, and 128 each coordinate Fe cation.

Belongs to the LuxS family. As to quaternary structure, homodimer. It depends on Fe cation as a cofactor.

The catalysed reaction is S-(5-deoxy-D-ribos-5-yl)-L-homocysteine = (S)-4,5-dihydroxypentane-2,3-dione + L-homocysteine. Its function is as follows. Involved in the synthesis of autoinducer 2 (AI-2) which is secreted by bacteria and is used to communicate both the cell density and the metabolic potential of the environment. The regulation of gene expression in response to changes in cell density is called quorum sensing. Catalyzes the transformation of S-ribosylhomocysteine (RHC) to homocysteine (HC) and 4,5-dihydroxy-2,3-pentadione (DPD). This chain is S-ribosylhomocysteine lyase, found in Klebsiella pneumoniae (strain 342).